We begin with the raw amino-acid sequence, 92 residues long: Neuropeptide ShK-like2 (92 aa).

An N-terminal signal peptide occupies residues 1-23; the sequence is MTTIRCVLFAVLLFAYCALLIKA. The propeptide occupies 24 to 51; the sequence is RSIDAEAEKTWQEEETKTVAEKSPLKKR. Cystine bridges form between Cys-53/Cys-92, Cys-61/Cys-85, and Cys-70/Cys-89.

Transcripts are first expressed mostly in the endoderm (with rare ectodermal cells) in the late planulae. They are mostly expressed in endodermal ganglion cells in the body column and tentacles in primary polyps, as well as in a small number of ectodermal sensory neurons in tentacles and body wall. They are not expressed in nematocytes. In terms of tissue distribution, transcripts are predominantly expressed in ectodermal sensory neurons in early and late planulae. They are expressed in endodermal ganglion cells in the body column and tentacles in primary polyps, as well as in a small number of ectodermal neurons in pharynx. They are not expressed in nematocytes.

Functionally, in vivo, this neuropeptide induces contraction paralysis followed by death (within 2 hours) on 4 zebrafish larvae on the 15 tested. Also induces body contraction in Nematostella 11-dpf polyps. This chain is Neuropeptide ShK-like2, found in Nematostella vectensis (Starlet sea anemone).